Consider the following 369-residue polypeptide: Glutamate 5-kinase (369 aa).

Lys-14 is an ATP binding site. Residues Ser-56, Asp-143, and Asn-155 each coordinate substrate. Residues 175–176 (SD) and 215–221 (TGGMASK) contribute to the ATP site. A PUA domain is found at 277–351 (AGKIRLDQGA…GMKTQELPDD (75 aa)).

Belongs to the glutamate 5-kinase family.

Its subcellular location is the cytoplasm. It carries out the reaction L-glutamate + ATP = L-glutamyl 5-phosphate + ADP. The protein operates within amino-acid biosynthesis; L-proline biosynthesis; L-glutamate 5-semialdehyde from L-glutamate: step 1/2. Catalyzes the transfer of a phosphate group to glutamate to form L-glutamate 5-phosphate. The sequence is that of Glutamate 5-kinase from Corynebacterium efficiens (strain DSM 44549 / YS-314 / AJ 12310 / JCM 11189 / NBRC 100395).